The chain runs to 749 residues: MSQWNQVQQLEIKFLEQVDQFYDDNFPMEIRHLLAQWIETQDWEVASNNETMATILLQNLLIQLDEQLGRVSKEKNLLLIHNLKRIRKVLQGKFHGNPMHVAVVISNCLREERRILAAANMPIQGPLEKSLQSSSVSERQRNVEHKVSAIKNSVQMTEQDTKYLEDLQDEFDYRYKTIQTMDQGDKNSILVNQEVLTLLQEMLNSLDFKRKEALSKMTQIVNETDLLMNSMLLEELQDWKKRQQIACIGGPLHNGLDQLQNCFTLLAESLFQLRQQLEKLQEQSTKMTYEGDPIPAQRAHLLERATFLIYNLFKNSFVVERQPCMPTHPQRPMVLKTLIQFTVKLRLLIKLPELNYQVKVKASIDKNVSTLSNRRFVLCGTHVKAMSSEESSNGSLSVEFRHLQPKEMKCSTGSKGNEGCHMVTEELHSITFETQICLYGLTINLETSSLPVVMISNVSQLPNAWASIIWYNVSTNDSQNLVFFNNPPSVTLGQLLEVMSWQFSSYVGRGLNSEQLNMLAEKLTVQSNYNDGHLTWAKFCKEHLPGKTFTFWTWLEAILDLIKKHILPLWIDGYIMGFVSKEKERLLLKDKMPGTFLLRFSESHLGGITFTWVDQSENGEVRFHSVEPYNKGRLSALAFADILRDYKVIMAENIPENPLKYLYPDIPKDKAFGKHYSSQPCEVSRPTERGDKGYVPSVFIPISTIRSDSTEPQSPSDLLPMSPSAYAVLRENLSPTTIETAMNSPYSAE.

The region spanning 570–665 (WIDGYIMGFV…ENPLKYLYPD (96 aa)) is the SH2 domain. K668 carries the N6-acetyllysine modification. A Phosphotyrosine; by JAK modification is found at Y694. S722 is subject to Phosphoserine.

This sequence belongs to the transcription factor STAT family. In terms of assembly, forms a homodimer or a heterodimer with a related family member. Interacts with ARL2BP. Interacts with STAT1. Interacts with JUN; this complex efficiently interacts with the AP-1-related sequence of the IFN-gamma promoter. Post-translationally, acetylation at Lys-668 is required for JAK2-mediated phosphorylation and activation of STAT4. Tyrosine phosphorylated upon IL12 and IFN-alpha activation, but not by IFN-gamma in T-lymphocytes and NK cells. Serine phosphorylation is required for maximal transcriptional activity but not for DNA binding. Phosphorylation by MAP2K6 at Ser-722 is required for full transcriptional activity induced by IL12. However this serine phosphorylation is not required for cell proliferation although critical for IFN-gamma production. As to expression, expression is restricted to testis, thymus, and spleen.

It is found in the cytoplasm. It localises to the nucleus. In terms of biological role, transcriptional regulator mainly expressed in hematopoietic cells that plays a critical role in cellular growth, differentiation and immune response. Plays a key role in the differentiation of T-helper 1 cells and the production of interferon-gamma. Also participates in multiple neutrophil functions including chemotaxis and production of the neutrophil extracellular traps. After IL12 binding to its receptor IL12RB2, STAT4 interacts with the intracellular domain of IL12RB2 and becomes tyrosine phosphorylated. Phosphorylated STAT4 then homodimerizes and migrates to the nucleus where it can recognize STAT target sequences present in IL12 responsive genes. Although IL12 appears to be the predominant activating signal, STAT4 can also be phosphorylated and activated in response to IFN-gamma stimulation via JAK1 and TYK2 and in response to different interleukins including IL23, IL2 and IL35. Transcription activation of IFN-gamma gene is mediated by interaction with JUN that forms a complex that efficiently interacts with the AP-1-related sequence of the IFN-gamma promoter. In response to IFN-alpha/beta signaling, acts as a transcriptional repressor and suppresses IL5 and IL13 mRNA expression during response to T-cell receptor (TCR) activation. This Mus musculus (Mouse) protein is Signal transducer and activator of transcription 4 (Stat4).